We begin with the raw amino-acid sequence, 249 residues long: Isoprenyl transferase (249 aa).

D25 is an active-site residue. Residue D25 coordinates Mg(2+). Substrate-binding positions include 26 to 29 (GNGR), W30, R38, H42, and 70 to 72 (STE). N73 functions as the Proton acceptor in the catalytic mechanism. Residues W74, R76, R197, and 203-205 (RLS) contribute to the substrate site. Residue E216 participates in Mg(2+) binding.

This sequence belongs to the UPP synthase family. In terms of assembly, homodimer. The cofactor is Mg(2+).

In terms of biological role, catalyzes the condensation of isopentenyl diphosphate (IPP) with allylic pyrophosphates generating different type of terpenoids. This is Isoprenyl transferase from Streptococcus mutans serotype c (strain ATCC 700610 / UA159).